The sequence spans 451 residues: Phosphoglucosamine mutase (451 aa).

Serine 104 acts as the Phosphoserine intermediate in catalysis. Serine 104, aspartate 242, aspartate 244, and aspartate 246 together coordinate Mg(2+). At serine 104 the chain carries Phosphoserine.

This sequence belongs to the phosphohexose mutase family. Mg(2+) serves as cofactor. Activated by phosphorylation.

It carries out the reaction alpha-D-glucosamine 1-phosphate = D-glucosamine 6-phosphate. In terms of biological role, catalyzes the conversion of glucosamine-6-phosphate to glucosamine-1-phosphate. The polypeptide is Phosphoglucosamine mutase (Kocuria rhizophila (strain ATCC 9341 / DSM 348 / NBRC 103217 / DC2201)).